A 363-amino-acid chain; its full sequence is GDSL esterase/lipase At3g14220 (363 aa).

Positions 1-28 are cleaved as a signal peptide; that stretch reads MAKNRNLVFFLGVLASFTLSSFPVTVSG. The Nucleophile role is filled by S39. Catalysis depends on residues D318 and H321.

The protein belongs to the 'GDSL' lipolytic enzyme family.

The protein resides in the secreted. This Arabidopsis thaliana (Mouse-ear cress) protein is GDSL esterase/lipase At3g14220.